Reading from the N-terminus, the 392-residue chain is 8-amino-7-oxononanoate synthase (392 aa).

A substrate-binding site is contributed by arginine 18. Residue 105 to 106 (GY) coordinates pyridoxal 5'-phosphate. Histidine 130 is a binding site for substrate. Positions 177, 205, and 234 each coordinate pyridoxal 5'-phosphate. Lysine 237 carries the post-translational modification N6-(pyridoxal phosphate)lysine. Threonine 351 contributes to the substrate binding site.

Belongs to the class-II pyridoxal-phosphate-dependent aminotransferase family. BioF subfamily. Homodimer. Pyridoxal 5'-phosphate serves as cofactor.

It carries out the reaction 6-carboxyhexanoyl-[ACP] + L-alanine + H(+) = (8S)-8-amino-7-oxononanoate + holo-[ACP] + CO2. It participates in cofactor biosynthesis; biotin biosynthesis. Functionally, catalyzes the decarboxylative condensation of pimeloyl-[acyl-carrier protein] and L-alanine to produce 8-amino-7-oxononanoate (AON), [acyl-carrier protein], and carbon dioxide. The chain is 8-amino-7-oxononanoate synthase from Thioalkalivibrio sulfidiphilus (strain HL-EbGR7).